A 698-amino-acid polypeptide reads, in one-letter code: UvrABC system protein B (698 aa).

Residues 35–210 (ARLQAGEKDI…TFRVRGDTVE (176 aa)) enclose the Helicase ATP-binding domain. Position 48 to 55 (48 to 55 (GATGTGKS)) interacts with ATP. Positions 101 to 124 (YYDYYQPEAYVPSSDTYIEKDSSI) match the Beta-hairpin motif. In terms of domain architecture, Helicase C-terminal spans 438–604 (QIDDLLAEIN…PLRKRIGDIT (167 aa)). A UVR domain is found at 654–689 (AELIQELTDQMHVAAGELQFEVAARLRDEISDLKKE).

Belongs to the UvrB family. As to quaternary structure, forms a heterotetramer with UvrA during the search for lesions. Interacts with UvrC in an incision complex.

It is found in the cytoplasm. The UvrABC repair system catalyzes the recognition and processing of DNA lesions. A damage recognition complex composed of 2 UvrA and 2 UvrB subunits scans DNA for abnormalities. Upon binding of the UvrA(2)B(2) complex to a putative damaged site, the DNA wraps around one UvrB monomer. DNA wrap is dependent on ATP binding by UvrB and probably causes local melting of the DNA helix, facilitating insertion of UvrB beta-hairpin between the DNA strands. Then UvrB probes one DNA strand for the presence of a lesion. If a lesion is found the UvrA subunits dissociate and the UvrB-DNA preincision complex is formed. This complex is subsequently bound by UvrC and the second UvrB is released. If no lesion is found, the DNA wraps around the other UvrB subunit that will check the other stand for damage. This chain is UvrABC system protein B, found in Beutenbergia cavernae (strain ATCC BAA-8 / DSM 12333 / CCUG 43141 / JCM 11478 / NBRC 16432 / NCIMB 13614 / HKI 0122).